We begin with the raw amino-acid sequence, 114 residues long: Fumarate reductase subunit D (114 aa).

Helical transmembrane passes span 24 to 44 (VSAI…PFGL), 50 to 70 (LITF…TIFP), and 92 to 112 (GGFI…FAVI).

This sequence belongs to the FrdD family. Part of an enzyme complex containing four subunits: a flavoprotein (FrdA), an iron-sulfur protein (FrdB), and two hydrophobic anchor proteins (FrdC and FrdD).

Its subcellular location is the cell inner membrane. In terms of biological role, anchors the catalytic components of the fumarate reductase complex to the cell membrane, binds quinones. The sequence is that of Fumarate reductase subunit D from Haemophilus influenzae (strain PittGG).